The chain runs to 123 residues: uncharacterized protein (123 aa).

Positions 1 to 20 are cleaved as a signal peptide; that stretch reads MARTLALRASAGLVAGMAMA.

This is an uncharacterized protein from Mycobacterium bovis (strain ATCC BAA-935 / AF2122/97).